The primary structure comprises 33 residues: Neurotoxin Nk-3FTx (33 aa).

Disulfide bonds link C3/C24 and C6/C11.

Expressed by the venom gland.

The protein localises to the secreted. Possible voltage-gated potassium channel (Kv) blocker. Decreases amplitude of compound action potential and conduction velocity in toad sciatic nerve. Has only mild anticoagulant activity even at a concentration of 5ug/ml. Shows no cytotoxicity towards human cell lines. The chain is Neurotoxin Nk-3FTx from Naja kaouthia (Monocled cobra).